The following is a 193-amino-acid chain: Ribonuclease HII (193 aa).

The 179-residue stretch at 15 to 193 (CIVAGIDEAG…PYHRRSFRCC (179 aa)) folds into the RNase H type-2 domain. Residues Asp-21, Glu-22, and Asp-112 each coordinate a divalent metal cation.

This sequence belongs to the RNase HII family. Mn(2+) serves as cofactor. Requires Mg(2+) as cofactor.

The protein localises to the cytoplasm. The enzyme catalyses Endonucleolytic cleavage to 5'-phosphomonoester.. Endonuclease that specifically degrades the RNA of RNA-DNA hybrids. The chain is Ribonuclease HII from Rickettsia conorii (strain ATCC VR-613 / Malish 7).